The primary structure comprises 211 residues: Large ribosomal subunit protein uL4 (211 aa).

The segment at 41–87 (QAHARQGTASTLTRSEVRGGGRKPYKQKGTGRARQGSIRTPLRPGGG) is disordered. Residues 60-71 (GGRKPYKQKGTG) show a composition bias toward basic residues.

This sequence belongs to the universal ribosomal protein uL4 family. As to quaternary structure, part of the 50S ribosomal subunit.

Functionally, one of the primary rRNA binding proteins, this protein initially binds near the 5'-end of the 23S rRNA. It is important during the early stages of 50S assembly. It makes multiple contacts with different domains of the 23S rRNA in the assembled 50S subunit and ribosome. Forms part of the polypeptide exit tunnel. The protein is Large ribosomal subunit protein uL4 of Parasynechococcus marenigrum (strain WH8102).